The primary structure comprises 376 residues: Glucose-1-phosphate adenylyltransferase (376 aa).

Residues Tyr-101, Gly-166, 181 to 182, and Ser-192 contribute to the alpha-D-glucose 1-phosphate site; that span reads EK.

This sequence belongs to the bacterial/plant glucose-1-phosphate adenylyltransferase family. In terms of assembly, homotetramer.

It catalyses the reaction alpha-D-glucose 1-phosphate + ATP + H(+) = ADP-alpha-D-glucose + diphosphate. It participates in glycan biosynthesis; glycogen biosynthesis. Its function is as follows. Involved in the biosynthesis of ADP-glucose, a building block required for the elongation reactions to produce glycogen. Catalyzes the reaction between ATP and alpha-D-glucose 1-phosphate (G1P) to produce pyrophosphate and ADP-Glc. In Bacillus cereus (strain ATCC 10987 / NRS 248), this protein is Glucose-1-phosphate adenylyltransferase.